The primary structure comprises 795 residues: RINT1-like protein MAG2 (795 aa).

A coiled-coil region spans residues 35–64 (TGLVSELQTEISELDQRLAGLNRQLESGLA). Residues 91–111 (TSVTRSASDSGKEEEATEHVA) are disordered. Basic and acidic residues predominate over residues 100-111 (SGKEEEATEHVA). One can recognise an RINT1/TIP20 domain in the interval 207-795 (ALAMMRPQAI…KKVAKSRVFS (589 aa)).

It belongs to the RINT1 family. In terms of assembly, interacts with SEC20 and SYP81. Interacts with ZW10 (via the central region). Forms a complex with ZW10/MIP1, MIP2 and MIP3 on the endoplasmic reticulum. Highly expressed in dry seeds. Expressed at low levels in roots, rosette and cauline leaves, stems and flowers.

Its subcellular location is the endoplasmic reticulum membrane. In terms of biological role, functions in the anterograde transport of storage protein precursors from the endoplasmic reticulum (ER) to the Golgi complex and in the retrograde transport from the Golgi complex to the ER. Forms a complex with ZW10/MIP1, MIP2 and MIP3 on the ER that may be responsible for efficient transport of seed storage proteins. Required for the responses to environmental stresses during seed germination and vegetative growth. Probably not involved in the retrograde transport from the ER to the apoplast. In Arabidopsis thaliana (Mouse-ear cress), this protein is RINT1-like protein MAG2.